The following is a 216-amino-acid chain: Probable transaldolase (216 aa).

The active-site Schiff-base intermediate with substrate is lysine 83.

This sequence belongs to the transaldolase family. Type 3B subfamily.

It is found in the cytoplasm. The catalysed reaction is D-sedoheptulose 7-phosphate + D-glyceraldehyde 3-phosphate = D-erythrose 4-phosphate + beta-D-fructose 6-phosphate. Its pathway is carbohydrate degradation; pentose phosphate pathway; D-glyceraldehyde 3-phosphate and beta-D-fructose 6-phosphate from D-ribose 5-phosphate and D-xylulose 5-phosphate (non-oxidative stage): step 2/3. Transaldolase is important for the balance of metabolites in the pentose-phosphate pathway. In Clostridioides difficile (strain 630) (Peptoclostridium difficile), this protein is Probable transaldolase.